The following is a 104-amino-acid chain: L-rhamnose mutarotase (104 aa).

Tyrosine 18 contributes to the substrate binding site. The active-site Proton donor is histidine 22. Substrate is bound by residues tyrosine 41 and 76–77 (WW).

Belongs to the rhamnose mutarotase family. As to quaternary structure, homodimer.

It localises to the cytoplasm. The enzyme catalyses alpha-L-rhamnose = beta-L-rhamnose. Its pathway is carbohydrate metabolism; L-rhamnose metabolism. Involved in the anomeric conversion of L-rhamnose. This Salmonella newport (strain SL254) protein is L-rhamnose mutarotase.